We begin with the raw amino-acid sequence, 66 residues long: MPKMKTLKSASRRIKITGTGKVMAFKSGKRHQNTGKSGDEIRGKGKGFVLAKSEWARMKLMLPKGK.

It belongs to the bacterial ribosomal protein bL35 family.

The protein is Large ribosomal subunit protein bL35 of Deinococcus deserti (strain DSM 17065 / CIP 109153 / LMG 22923 / VCD115).